A 61-amino-acid polypeptide reads, in one-letter code: Short neurotoxin 2 (61 aa).

Disulfide bonds link Cys-3-Cys-23, Cys-17-Cys-40, Cys-42-Cys-53, and Cys-54-Cys-59.

It belongs to the three-finger toxin family. Short-chain subfamily. Type I alpha-neurotoxin sub-subfamily. In terms of tissue distribution, expressed by the venom gland.

Its subcellular location is the secreted. Functionally, binds to muscle nicotinic acetylcholine receptor (nAChR) and inhibit acetylcholine from binding to the receptor, thereby impairing neuromuscular transmission. This Naja haje haje (Egyptian cobra) protein is Short neurotoxin 2.